Reading from the N-terminus, the 550-residue chain is Dihydroxy-acid dehydratase (550 aa).

Position 78 (Asp-78) interacts with Mg(2+). Position 119 (Cys-119) interacts with [2Fe-2S] cluster. Residues Asp-120 and Lys-121 each contribute to the Mg(2+) site. An N6-carboxylysine modification is found at Lys-121. A [2Fe-2S] cluster-binding site is contributed by Cys-191. Glu-440 serves as a coordination point for Mg(2+). Ser-466 acts as the Proton acceptor in catalysis.

The protein belongs to the IlvD/Edd family. Homodimer. [2Fe-2S] cluster is required as a cofactor. Mg(2+) serves as cofactor.

The catalysed reaction is (2R)-2,3-dihydroxy-3-methylbutanoate = 3-methyl-2-oxobutanoate + H2O. It catalyses the reaction (2R,3R)-2,3-dihydroxy-3-methylpentanoate = (S)-3-methyl-2-oxopentanoate + H2O. It functions in the pathway amino-acid biosynthesis; L-isoleucine biosynthesis; L-isoleucine from 2-oxobutanoate: step 3/4. The protein operates within amino-acid biosynthesis; L-valine biosynthesis; L-valine from pyruvate: step 3/4. Functions in the biosynthesis of branched-chain amino acids. Catalyzes the dehydration of (2R,3R)-2,3-dihydroxy-3-methylpentanoate (2,3-dihydroxy-3-methylvalerate) into 2-oxo-3-methylpentanoate (2-oxo-3-methylvalerate) and of (2R)-2,3-dihydroxy-3-methylbutanoate (2,3-dihydroxyisovalerate) into 2-oxo-3-methylbutanoate (2-oxoisovalerate), the penultimate precursor to L-isoleucine and L-valine, respectively. The chain is Dihydroxy-acid dehydratase from Methanococcus maripaludis (strain C5 / ATCC BAA-1333).